The following is a 422-amino-acid chain: Tyrosine--tRNA ligase (422 aa).

Y37 lines the L-tyrosine pocket. Residues P42–H51 carry the 'HIGH' region motif. L-tyrosine contacts are provided by Y175 and Q179. Positions K235 to T239 match the 'KMSKS' region motif. Residue K238 participates in ATP binding. The region spanning K357–K414 is the S4 RNA-binding domain.

It belongs to the class-I aminoacyl-tRNA synthetase family. TyrS type 1 subfamily. Homodimer.

The protein resides in the cytoplasm. It catalyses the reaction tRNA(Tyr) + L-tyrosine + ATP = L-tyrosyl-tRNA(Tyr) + AMP + diphosphate + H(+). In terms of biological role, catalyzes the attachment of tyrosine to tRNA(Tyr) in a two-step reaction: tyrosine is first activated by ATP to form Tyr-AMP and then transferred to the acceptor end of tRNA(Tyr). The sequence is that of Tyrosine--tRNA ligase from Buchnera aphidicola subsp. Acyrthosiphon pisum (strain 5A).